The sequence spans 134 residues: MTRDQNGTWEMESNENFEGYMKALDIDFATRKIAVRLTQTKVIDQDGDNFKTKTTSTFRNYDVDFTVGVEFDEYTKSLDNRHVKALVTWEGDVLVCVQKGEKENRGWKQWIEGDKLYLELTCGDQVCRQVFKKK.

2 residues coordinate all-trans-retinol: Lys41 and Gln109.

It belongs to the calycin superfamily. Fatty-acid binding protein (FABP) family. In terms of tissue distribution, higher expression in adult small intestine and to a much lesser extent in fetal kidney.

It localises to the cytoplasm. Functionally, intracellular transport of retinol. This is Retinol-binding protein 2 (RBP2) from Homo sapiens (Human).